The primary structure comprises 232 residues: Orotidine 5'-phosphate decarboxylase (232 aa).

Substrate contacts are provided by residues D13, K35, 62–71, T122, R182, Q191, G211, and R212; that span reads DLKFHDIPNT. The active-site Proton donor is the K64.

The protein belongs to the OMP decarboxylase family. Type 1 subfamily. As to quaternary structure, homodimer.

It catalyses the reaction orotidine 5'-phosphate + H(+) = UMP + CO2. Its pathway is pyrimidine metabolism; UMP biosynthesis via de novo pathway; UMP from orotate: step 2/2. Functionally, catalyzes the decarboxylation of orotidine 5'-monophosphate (OMP) to uridine 5'-monophosphate (UMP). This Pseudomonas paraeruginosa (strain DSM 24068 / PA7) (Pseudomonas aeruginosa (strain PA7)) protein is Orotidine 5'-phosphate decarboxylase.